The sequence spans 141 residues: Large ribosomal subunit protein bL17 (141 aa).

The segment at 120–141 (TSAKGQDSGPVLTADEDEFEAA) is disordered.

Belongs to the bacterial ribosomal protein bL17 family. As to quaternary structure, part of the 50S ribosomal subunit. Contacts protein L32.

This is Large ribosomal subunit protein bL17 from Novosphingobium aromaticivorans (strain ATCC 700278 / DSM 12444 / CCUG 56034 / CIP 105152 / NBRC 16084 / F199).